The sequence spans 737 residues: Catalase-peroxidase (737 aa).

The disordered stretch occupies residues 1-29; that stretch reads MTDSPDATTGGCPVAHGDRLPHPTQGGAN. A cross-link (tryptophyl-tyrosyl-methioninium (Trp-Tyr) (with M-253)) is located at residues 101–227; sequence WHSAGTYRVS…LGATHMGLIY (127 aa). Residue His102 is the Proton acceptor of the active site. Residues 227-253 constitute a cross-link (tryptophyl-tyrosyl-methioninium (Tyr-Met) (with W-101)); sequence YVNPEGPEGKPDPVAAARDIRETFGRM. A heme b-binding site is contributed by His268.

This sequence belongs to the peroxidase family. Peroxidase/catalase subfamily. In terms of assembly, homodimer or homotetramer. It depends on heme b as a cofactor. Post-translationally, formation of the three residue Trp-Tyr-Met cross-link is important for the catalase, but not the peroxidase activity of the enzyme.

The catalysed reaction is H2O2 + AH2 = A + 2 H2O. It carries out the reaction 2 H2O2 = O2 + 2 H2O. Its function is as follows. Bifunctional enzyme with both catalase and broad-spectrum peroxidase activity. The sequence is that of Catalase-peroxidase from Saccharopolyspora erythraea (strain ATCC 11635 / DSM 40517 / JCM 4748 / NBRC 13426 / NCIMB 8594 / NRRL 2338).